The following is a 961-amino-acid chain: Roundabout homolog 4 (961 aa).

The signal sequence occupies residues 1–37; sequence MGQGEELRAAVDSGGMGLLGTKCPLPLLLLFIMGGKA. Ig-like C2-type domains follow at residues 42–142 and 148–235; these read PQIL…ARLS and EDFR…ARVS. Intrachain disulfides connect cysteine 63-cysteine 125 and cysteine 169-cysteine 218. N-linked (GlcNAc...) asparagine glycosylation is found at asparagine 211 and asparagine 257. Fibronectin type-III domains are found at residues 259 to 356 and 358 to 453; these read TLLN…LPEQ and PSAP…LEQA. N-linked (GlcNAc...) asparagine glycosylation is found at asparagine 371, asparagine 400, and asparagine 407. The segment covering 544–559 has biased composition (low complexity); it reads SGSRDLSSSSSLSSRL. 2 disordered regions span residues 544–563 and 600–634; these read SGSR…GVDP and QTSS…SSDS. A compositionally biased stretch (polar residues) spans 623–634; sequence TGTSSPWASSDS. 2 N-linked (GlcNAc...) asparagine glycosylation sites follow: asparagine 691 and asparagine 723. A disordered region spans residues 726–810; the sequence is ELAARPLPPT…SLEEEDQDSV (85 aa). Low complexity predominate over residues 755–769; it reads LQAPSSDPLPAAPLS. Over residues 770–783 the composition is skewed to polar residues; that stretch reads VLNSSRPSSPQASF. N-linked (GlcNAc...) asparagine glycans are attached at residues asparagine 772 and asparagine 793. Low complexity predominate over residues 784–801; sequence LSVPSPGSSNLSSSSLSS. Serine 823 carries the phosphoserine modification.

Belongs to the immunoglobulin superfamily. ROBO family. Interacts with SLIT2 and ENAH.

Its function is as follows. Receptor for Slit proteins, at least for SLIT2, and seems to be involved in angiogenesis and vascular patterning. May mediate the inhibition of primary endothelial cell migration by Slit proteins. Involved in the maintenance of endothelial barrier organization and function. The protein is Roundabout homolog 4 (Robo4) of Rattus norvegicus (Rat).